Here is a 101-residue protein sequence, read N- to C-terminus: uncharacterized protein (101 aa).

A run of 2 helical transmembrane segments spans residues 35-55 and 66-86; these read LWTM…LIII and FLFF…TLLF.

It localises to the membrane. This is an uncharacterized protein from Saccharomyces cerevisiae (strain ATCC 204508 / S288c) (Baker's yeast).